Reading from the N-terminus, the 186-residue chain is C-type lectin domain family 19 member A (186 aa).

The N-terminal stretch at 1 to 19 (MQRWTLWAAAFLTLHSAQA) is a signal peptide. Residues 47 to 179 (FKGHCYRFFP…CSRKFPFVCK (133 aa)) enclose the C-type lectin domain. The N-linked (GlcNAc...) asparagine glycan is linked to Asn-58. 2 disulfide bridges follow: Cys-68-Cys-178 and Cys-151-Cys-170.

Its subcellular location is the secreted. This Homo sapiens (Human) protein is C-type lectin domain family 19 member A.